A 310-amino-acid polypeptide reads, in one-letter code: Probable mitochondrial import receptor subunit TOM40-2 (310 aa).

Residue Met-1 is modified to N-acetylmethionine.

Belongs to the Tom40 family. In terms of assembly, forms part of the preprotein translocase complex of the outer mitochondrial membrane (TOM complex) which consists of at least 6 different proteins (TOM5, TOM6, TOM7, TOM20, TOM22/TOM9 and TOM40). Present in a large lipid-enriched complex called mitochondrial transmembrane lipoprotein (MTL) complex made of proteins located in the two mitochondrial membranes, including the TOM complex and the core components of the MICOS complex and containing at least digalactosyldiacylglycerol (DGDG). Binds to MIC60. Component of a mitochondrial large protein complex that contains, at least, MIC60, DGS1, TOM40, TOM20 proteins, and petC/RISP. As to expression, expressed in roots, flowers, young cotyledons and leaves.

The protein localises to the mitochondrion outer membrane. In terms of biological role, central component of the receptor complex responsible for the recognition and translocation of cytosolically synthesized mitochondrial preproteins. Together with TOM22 functions as the transit peptide receptor at the surface of the mitochondrion outer membrane and facilitates the movement of preproteins into the translocation pore. Directly involved in the pore formation. The sequence is that of Probable mitochondrial import receptor subunit TOM40-2 from Arabidopsis thaliana (Mouse-ear cress).